The primary structure comprises 323 residues: GTP 3',8-cyclase (323 aa).

A Radical SAM core domain is found at 4 to 228 (KYGRSIDYLR…VPVNIQNNGP (225 aa)). Arg-13 contributes to the GTP binding site. Residues Cys-20 and Cys-24 each contribute to the [4Fe-4S] cluster site. Position 26 (Tyr-26) interacts with S-adenosyl-L-methionine. Residue Cys-27 participates in [4Fe-4S] cluster binding. A GTP-binding site is contributed by Arg-63. Gly-67 contributes to the S-adenosyl-L-methionine binding site. Thr-94 contributes to the GTP binding site. Position 118 (Ser-118) interacts with S-adenosyl-L-methionine. Lys-155 provides a ligand contact to GTP. Residue Met-189 participates in S-adenosyl-L-methionine binding. Residues Cys-252 and Cys-255 each coordinate [4Fe-4S] cluster. Position 257-259 (257-259 (RMR)) interacts with GTP. A [4Fe-4S] cluster-binding site is contributed by Cys-269.

It belongs to the radical SAM superfamily. MoaA family. In terms of assembly, monomer and homodimer. [4Fe-4S] cluster serves as cofactor.

The catalysed reaction is GTP + AH2 + S-adenosyl-L-methionine = (8S)-3',8-cyclo-7,8-dihydroguanosine 5'-triphosphate + 5'-deoxyadenosine + L-methionine + A + H(+). The protein operates within cofactor biosynthesis; molybdopterin biosynthesis. In terms of biological role, catalyzes the cyclization of GTP to (8S)-3',8-cyclo-7,8-dihydroguanosine 5'-triphosphate. The sequence is that of GTP 3',8-cyclase from Petrotoga mobilis (strain DSM 10674 / SJ95).